Reading from the N-terminus, the 80-residue chain is Exodeoxyribonuclease 7 small subunit (80 aa).

It belongs to the XseB family. Heterooligomer composed of large and small subunits.

The protein resides in the cytoplasm. The catalysed reaction is Exonucleolytic cleavage in either 5'- to 3'- or 3'- to 5'-direction to yield nucleoside 5'-phosphates.. Functionally, bidirectionally degrades single-stranded DNA into large acid-insoluble oligonucleotides, which are then degraded further into small acid-soluble oligonucleotides. This Vibrio parahaemolyticus serotype O3:K6 (strain RIMD 2210633) protein is Exodeoxyribonuclease 7 small subunit.